The sequence spans 194 residues: UPF0301 protein FTM_0963 (194 aa).

It belongs to the UPF0301 (AlgH) family.

The polypeptide is UPF0301 protein FTM_0963 (Francisella tularensis subsp. mediasiatica (strain FSC147)).